A 223-amino-acid polypeptide reads, in one-letter code: UPF0502 protein Sbal223_2520 (223 aa).

Belongs to the UPF0502 family.

The polypeptide is UPF0502 protein Sbal223_2520 (Shewanella baltica (strain OS223)).